A 184-amino-acid polypeptide reads, in one-letter code: Large ribosomal subunit protein uL15 (184 aa).

Positions 1 to 62 (MDLSSLRPAK…QMPMYRRLPK (62 aa)) are disordered. Gly residues predominate over residues 21–35 (RGPGSGNGTTAGKGN).

This sequence belongs to the universal ribosomal protein uL15 family. Part of the 50S ribosomal subunit.

Functionally, binds to the 23S rRNA. In Chlorobaculum parvum (strain DSM 263 / NCIMB 8327) (Chlorobium vibrioforme subsp. thiosulfatophilum), this protein is Large ribosomal subunit protein uL15.